The sequence spans 521 residues: Bifunctional purine biosynthesis protein PurH (521 aa).

The MGS-like domain maps to methionine 1 to valine 147.

The protein belongs to the PurH family.

It catalyses the reaction (6R)-10-formyltetrahydrofolate + 5-amino-1-(5-phospho-beta-D-ribosyl)imidazole-4-carboxamide = 5-formamido-1-(5-phospho-D-ribosyl)imidazole-4-carboxamide + (6S)-5,6,7,8-tetrahydrofolate. It carries out the reaction IMP + H2O = 5-formamido-1-(5-phospho-D-ribosyl)imidazole-4-carboxamide. It participates in purine metabolism; IMP biosynthesis via de novo pathway; 5-formamido-1-(5-phospho-D-ribosyl)imidazole-4-carboxamide from 5-amino-1-(5-phospho-D-ribosyl)imidazole-4-carboxamide (10-formyl THF route): step 1/1. Its pathway is purine metabolism; IMP biosynthesis via de novo pathway; IMP from 5-formamido-1-(5-phospho-D-ribosyl)imidazole-4-carboxamide: step 1/1. This chain is Bifunctional purine biosynthesis protein PurH, found in Acidithiobacillus ferrooxidans (strain ATCC 53993 / BNL-5-31) (Leptospirillum ferrooxidans (ATCC 53993)).